A 264-amino-acid chain; its full sequence is Catenin delta-2 (264 aa).

4 ARM repeats span residues 20–59 (NKIKAEIRRQGGIQLLVDLLDHRMTEVHRSACGALRNLVY), 64–104 (DDNK…NLSS), 120–162 (LTNA…NVSS), and 166–211 (EARR…NLSY). Positions 238–264 (GKDAESSGCWGKKKKKKKSQDQWDGVG) are disordered.

The protein belongs to the beta-catenin family. Binds to E-cadherin at a juxtamembrane site within the cytoplasmic domain. Binds to PSEN1. Interacts with ZBTB33. Interacts with ARHGEF28. Interacts (via the extreme C-terminus) with FRMPD2 (via the PDZ 2 domain). Interacts with PDZD2. Interacts with CDK5. Interacts with CTNBB1. Interacts with GSK3A and GSK3B. Interacts with DNM2. Interacts with CCDC85B. Post-translationally, O-glycosylated. In terms of processing, phosphorylated by CDK5. Phosphorylated by GSK3B. As to expression, predominantly expressed in brain; accumulates in cortical neurons (at protein level).

The protein localises to the nucleus. It is found in the cell junction. It localises to the adherens junction. The protein resides in the cell projection. Its subcellular location is the dendrite. The protein localises to the perikaryon. Has a critical role in neuronal development, particularly in the formation and/or maintenance of dendritic spines and synapses. Involved in the regulation of canonical Wnt signaling. It probably acts on beta-catenin turnover, facilitating beta-catenin interaction with GSK3B, phosphorylation, ubiquitination and degradation. May be involved in neuronal cell adhesion and tissue morphogenesis and integrity by regulating adhesion molecules. Functions as a transcriptional activator when bound to ZBTB33. The sequence is that of Catenin delta-2 (Ctnnd2) from Rattus norvegicus (Rat).